The primary structure comprises 352 residues: Biotin synthase (352 aa).

One can recognise a Radical SAM core domain in the interval 44 to 262; that stretch reads NRVQVSTLLS…LAVARIMMPK (219 aa). Positions 59, 63, and 66 each coordinate [4Fe-4S] cluster. [2Fe-2S] cluster contacts are provided by cysteine 103, cysteine 134, cysteine 194, and arginine 266.

It belongs to the radical SAM superfamily. Biotin synthase family. Homodimer. Requires [4Fe-4S] cluster as cofactor. [2Fe-2S] cluster is required as a cofactor.

The catalysed reaction is (4R,5S)-dethiobiotin + (sulfur carrier)-SH + 2 reduced [2Fe-2S]-[ferredoxin] + 2 S-adenosyl-L-methionine = (sulfur carrier)-H + biotin + 2 5'-deoxyadenosine + 2 L-methionine + 2 oxidized [2Fe-2S]-[ferredoxin]. It functions in the pathway cofactor biosynthesis; biotin biosynthesis; biotin from 7,8-diaminononanoate: step 2/2. Its function is as follows. Catalyzes the conversion of dethiobiotin (DTB) to biotin by the insertion of a sulfur atom into dethiobiotin via a radical-based mechanism. This chain is Biotin synthase, found in Ectopseudomonas mendocina (strain ymp) (Pseudomonas mendocina).